Consider the following 406-residue polypeptide: Arginine deiminase (406 aa).

The active-site Amidino-cysteine intermediate is Cys396.

The protein belongs to the arginine deiminase family.

Its subcellular location is the cytoplasm. The enzyme catalyses L-arginine + H2O = L-citrulline + NH4(+). The protein operates within amino-acid degradation; L-arginine degradation via ADI pathway; carbamoyl phosphate from L-arginine: step 1/2. This Aliivibrio fischeri (strain ATCC 700601 / ES114) (Vibrio fischeri) protein is Arginine deiminase.